We begin with the raw amino-acid sequence, 717 residues long: Mitochondrial potassium channel ATP-binding subunit (717 aa).

The N-terminal 25 residues, 1 to 25 (MLVHLFRFGIRGGPVPGWSLQSLRF), are a transit peptide targeting the mitochondrion. 4 helical membrane passes run 127-147 (LLAL…NVQI), 178-198 (VQLL…LVLL), 278-298 (LMLA…GSGL), and 365-385 (NIAF…LVAG). In terms of domain architecture, ABC transmembrane type-1 spans 132 to 419 (AAIVLALGAA…LSVLFGQVVR (288 aa)). Residues 454 to 691 (ITFQNVTFSY…GGLYSELIRR (238 aa)) enclose the ABC transporter domain. 489–496 (GQSGGGKT) is a binding site for ATP. The disordered stretch occupies residues 695 to 717 (DASLTSTPPAEKPEDPKSCQSKA).

It belongs to the ABC transporter superfamily. ABCB family. Multidrug resistance exporter (TC 3.A.1.201) subfamily. The mitochondrial potassium channel (mitoK(ATP)) is composed of 4 subunits of CCDC51/MITOK and 4 subunits of ABCB8/MITOSUR. Interacts with PAAT. Interacts with NRP1; NRP1 regulates ABCB8/MITOSUR protein levels in mitochondria.

The protein localises to the mitochondrion inner membrane. With respect to regulation, channel activity inhibited by ATP via ABCB8/MITOSUR subunit. In terms of biological role, ATP-binding subunit of the mitochondrial ATP-gated potassium channel (mitoK(ATP)). Together with pore-forming subunit CCDC51/MITOK of the mitoK(ATP) channel, mediates ATP-dependent potassium currents across the mitochondrial inner membrane. An increase in ATP intracellular levels closes the channel, inhibiting K(+) transport, whereas a decrease in ATP levels enhances K(+) uptake in the mitochondrial matrix. Plays a role in mitochondrial iron transport. Required for maintenance of normal cardiac function, possibly by influencing mitochondrial iron export and regulating the maturation of cytosolic iron sulfur cluster-containing enzymes. The sequence is that of Mitochondrial potassium channel ATP-binding subunit from Mus musculus (Mouse).